Consider the following 271-residue polypeptide: Mannosyl-3-phosphoglycerate phosphatase (271 aa).

Catalysis depends on Asp-13, which acts as the Nucleophile. The Mg(2+) site is built by Asp-13, Asp-15, and Asp-214.

The protein belongs to the HAD-like hydrolase superfamily. MPGP family. The cofactor is Mg(2+).

The protein localises to the cytoplasm. It carries out the reaction 2-O-(alpha-D-mannosyl)-3-phosphoglycerate + H2O = (2R)-2-O-(alpha-D-mannosyl)-glycerate + phosphate. In Shigella dysenteriae serotype 1 (strain Sd197), this protein is Mannosyl-3-phosphoglycerate phosphatase (yedP).